Reading from the N-terminus, the 56-residue chain is Large ribosomal subunit protein bL32 (56 aa).

The tract at residues methionine 1–lysine 56 is disordered. Residues arginine 7–lysine 20 show a composition bias toward basic residues. Over residues arginine 29 to methionine 38 the composition is skewed to basic and acidic residues.

The protein belongs to the bacterial ribosomal protein bL32 family.

This is Large ribosomal subunit protein bL32 from Listeria monocytogenes serotype 4a (strain HCC23).